The following is a 485-amino-acid chain: Apolipoprotein N-acyltransferase (485 aa).

The next 6 helical transmembrane spans lie at 8–28, 49–69, 76–96, 121–141, 157–177, and 186–206; these read IAGAILPLAFAPFNWFPIAFV, GWLFGFGFFGAGASWVYVSIH, VPLAVLITVLFVFVLALFIAF, WWVVWEWLRSILFTGFPWLFL, FGIYGISLIVAFISGCIYLLV, and IMCLILIILPFIVGWVLTFIP. The region spanning 220–457 is the CN hydrolase domain; that stretch reads VQGNIGQRLK…RLLLTGQIKP (238 aa). Residue Glu-259 is the Proton acceptor of the active site. The active site involves Lys-317. Cys-369 serves as the catalytic Nucleophile. Residues 464–484 traverse the membrane as a helical segment; that stretch reads LMRWNYYPVVGIIIIFLLLTF.

It belongs to the CN hydrolase family. Apolipoprotein N-acyltransferase subfamily.

Its subcellular location is the cell inner membrane. The enzyme catalyses N-terminal S-1,2-diacyl-sn-glyceryl-L-cysteinyl-[lipoprotein] + a glycerophospholipid = N-acyl-S-1,2-diacyl-sn-glyceryl-L-cysteinyl-[lipoprotein] + a 2-acyl-sn-glycero-3-phospholipid + H(+). The protein operates within protein modification; lipoprotein biosynthesis (N-acyl transfer). Its function is as follows. Catalyzes the phospholipid dependent N-acylation of the N-terminal cysteine of apolipoprotein, the last step in lipoprotein maturation. In Coxiella burnetii (strain RSA 493 / Nine Mile phase I), this protein is Apolipoprotein N-acyltransferase.